A 127-amino-acid chain; its full sequence is Protein NEGATIVE REGULATOR OF RESISTANCE (127 aa).

2 disordered regions span residues 1–28 and 47–127; these read MDAT…VDEV and TRRL…RAPA. Residues 112–127 show a composition bias toward low complexity; sequence PPSDAPATPRSARAPA.

It belongs to the NPR1-interactor family. In terms of assembly, interacts with NPR1/NH1. Interacts with NPR3/NH3.

The protein localises to the nucleus. Functionally, acts as a negative regulator of disease resistance. Acts on basal resistance, age-related resistance and resistance mediated by the LRR receptor kinase XA21. Plants over-expressing NRR display enhanced susceptibility to the bacterial blight Xanthomonas oryzae pv. oryzae (Xoo). Binds to and represses NPR1/NH1-mediated transcriptional activation of LG2 in vitro. The chain is Protein NEGATIVE REGULATOR OF RESISTANCE from Oryza sativa subsp. japonica (Rice).